Here is a 230-residue protein sequence, read N- to C-terminus: UPF0173 metal-dependent hydrolase Rsph17029_0942 (230 aa).

The protein belongs to the UPF0173 family.

The polypeptide is UPF0173 metal-dependent hydrolase Rsph17029_0942 (Cereibacter sphaeroides (strain ATCC 17029 / ATH 2.4.9) (Rhodobacter sphaeroides)).